We begin with the raw amino-acid sequence, 397 residues long: 2,3,4,5-tetrahydropyridine-2,6-dicarboxylate N-succinyltransferase (397 aa).

Glutamate 265 acts as the Acyl-anhydride intermediate in catalysis. Succinyl-CoA contacts are provided by residues arginine 267, glycine 282, serine 285, alanine 308, 323 to 324, glycine 331, lysine 360, and 373 to 376; these read DA and RQNS.

Belongs to the type 2 tetrahydrodipicolinate N-succinyltransferase family. As to quaternary structure, homotrimer.

Its subcellular location is the cytoplasm. The enzyme catalyses (S)-2,3,4,5-tetrahydrodipicolinate + succinyl-CoA + H2O = (S)-2-succinylamino-6-oxoheptanedioate + CoA. It functions in the pathway amino-acid biosynthesis; L-lysine biosynthesis via DAP pathway; LL-2,6-diaminopimelate from (S)-tetrahydrodipicolinate (succinylase route): step 1/3. In terms of biological role, catalyzes the conversion of the cyclic tetrahydrodipicolinate (THDP) into the acyclic N-succinyl-L-2-amino-6-oxopimelate using succinyl-CoA. The protein is 2,3,4,5-tetrahydropyridine-2,6-dicarboxylate N-succinyltransferase of Sulfurovum sp. (strain NBC37-1).